We begin with the raw amino-acid sequence, 251 residues long: Flap endonuclease Xni (251 aa).

D104 is a Mg(2+) binding site. One can recognise a 5'-3' exonuclease domain in the interval V160–L249. Residues L171, A172, P180, V182, and I185 each coordinate K(+). The tract at residues G184–S189 is interaction with DNA.

It belongs to the Xni family. Mg(2+) is required as a cofactor. It depends on K(+) as a cofactor.

In terms of biological role, has flap endonuclease activity. During DNA replication, flap endonucleases cleave the 5'-overhanging flap structure that is generated by displacement synthesis when DNA polymerase encounters the 5'-end of a downstream Okazaki fragment. The polypeptide is Flap endonuclease Xni (Salmonella heidelberg (strain SL476)).